We begin with the raw amino-acid sequence, 732 residues long: Cullin-3B (732 aa).

The Cullin neddylation domain maps to 662–724 (DRKPQIEAAI…RDFLERDNTD (63 aa)). Residue lysine 676 forms a Glycyl lysine isopeptide (Lys-Gly) (interchain with G-Cter in NEDD8) linkage.

This sequence belongs to the cullin family. As to quaternary structure, interacts with BTB/POZ-MATH proteins BPM1 and BPM3. In terms of processing, neddylated. Deneddylated via its interaction with the COP9 signalosome (CSN) complex.

It participates in protein modification; protein ubiquitination. In terms of biological role, component of the cullin-RING ubiquitin ligases (CRL), or CUL3-RBX1-BTB protein E3 ligase complexes which mediate the ubiquitination and subsequent proteasomal degradation of target proteins. The functional specificity of the CRL complex depends on the BTB domain-containing protein as the substrate recognition component. Involved in embryo pattern formation and endosperm development. Required for the normal division and organization of the root stem cells and columella root cap cells. Regulates primary root growth by an unknown pathway, but in an ethylene-dependent manner. Functions in distal root patterning, by an ethylene-independent mechanism. Functionally redundant with CUL3A. The protein is Cullin-3B (CUL3B) of Arabidopsis thaliana (Mouse-ear cress).